Consider the following 338-residue polypeptide: Fructose-1,6-bisphosphatase class 1 (338 aa).

Residues glutamate 92, aspartate 113, leucine 115, and aspartate 116 each coordinate Mg(2+). Substrate is bound by residues aspartate 116 to serine 119, asparagine 208, and lysine 274. Glutamate 280 is a Mg(2+) binding site.

Belongs to the FBPase class 1 family. Homotetramer. Requires Mg(2+) as cofactor.

The protein localises to the cytoplasm. The enzyme catalyses beta-D-fructose 1,6-bisphosphate + H2O = beta-D-fructose 6-phosphate + phosphate. It functions in the pathway carbohydrate biosynthesis; gluconeogenesis. The chain is Fructose-1,6-bisphosphatase class 1 from Paramagnetospirillum magneticum (strain ATCC 700264 / AMB-1) (Magnetospirillum magneticum).